Here is a 712-residue protein sequence, read N- to C-terminus: Polyribonucleotide nucleotidyltransferase (712 aa).

Mg(2+) is bound by residues Asp-487 and Asp-493. Residues Pro-554–Ile-613 form the KH domain. The region spanning Gly-623–Lys-691 is the S1 motif domain.

The protein belongs to the polyribonucleotide nucleotidyltransferase family. The cofactor is Mg(2+).

It is found in the cytoplasm. It carries out the reaction RNA(n+1) + phosphate = RNA(n) + a ribonucleoside 5'-diphosphate. In terms of biological role, involved in mRNA degradation. Catalyzes the phosphorolysis of single-stranded polyribonucleotides processively in the 3'- to 5'-direction. This is Polyribonucleotide nucleotidyltransferase from Bacillus anthracis (strain CDC 684 / NRRL 3495).